The primary structure comprises 175 residues: Disulfide bond formation protein B (175 aa).

The Cytoplasmic segment spans residues 1–13 (MSKLVTFSQQRSA). Residues 14–30 (WLILMFSALGLEASALY) traverse the membrane as a helical segment. At 31-48 (FQYVMLLDPCVMCIYIRV) the chain is on the periplasmic side. A disulfide bond links C40 and C43. The chain crosses the membrane as a helical span at residues 49-64 (AVLGLILAGLVGSIAP). The Cytoplasmic portion of the chain corresponds to 65–71 (RFWIVRF). The helical transmembrane segment at 72-89 (LGMSLWGVSSAWGAKLSF) threads the bilayer. The Periplasmic portion of the chain corresponds to 90–144 (ELYQMQANPSPFSTCSFYPEFPTWMPLDAWMPSIFMPTGMCSDIPWTMMSLSMTQ). An intrachain disulfide couples C104 to C130. The chain crosses the membrane as a helical span at residues 145 to 163 (WTLIAFVGYSIAFLLFIYP). The Cytoplasmic portion of the chain corresponds to 164-175 (GLLYKKPTNPYS).

Belongs to the DsbB family.

The protein resides in the cell inner membrane. In terms of biological role, required for disulfide bond formation in some periplasmic proteins. Acts by oxidizing the DsbA protein. The sequence is that of Disulfide bond formation protein B from Shewanella denitrificans (strain OS217 / ATCC BAA-1090 / DSM 15013).